Reading from the N-terminus, the 318-residue chain is S-adenosylmethionine/S-adenosylhomocysteine transporter (318 aa).

A run of 10 helical transmembrane segments spans residues 7-27, 44-64, 76-96, 105-125, 134-154, 163-183, 193-213, 231-251, 262-282, and 285-305; these read FANL…AFIW, LFVT…LLLF, VMPI…LEFI, KACF…YVQL, LGGL…GGGE, LGMP…GWTL, SLSI…LSLA, LFLQ…YNLF, FLSF…WLLL, and SFPP…RLIY. Residues 25–148 form the EamA 1 domain; that stretch reads FIWSSSFALS…LGLVSYLVYL (124 aa). One can recognise an EamA 2 domain in the interval 191-304; it reads CESLSITAIN…GFMVLGCRLI (114 aa).

It belongs to the drug/metabolite transporter (DMT) superfamily. 10 TMS drug/metabolite exporter (DME) (TC 2.A.7.3) family.

The protein resides in the cell membrane. Transports S-adenosylmethionine (SAM) and S-adenosylhomocysteine (SAH). Allows bacteria to acquire SAM from the eukaryotic host cell and to likely remove the toxic by-product SAH. The chain is S-adenosylmethionine/S-adenosylhomocysteine transporter from Chlamydia muridarum (strain MoPn / Nigg).